The chain runs to 135 residues: uncharacterized protein (135 aa).

Residues 68–135 are a coiled coil; the sequence is DEVDNYIRVF…KKESEDEDEL (68 aa). The disordered stretch occupies residues 88–135; sequence EKIVGKPPKSTSAPDIDELEEEPDEETEEKSEEKTEKKKKESEDEDEL. Acidic residues predominate over residues 102-117; it reads DIDELEEEPDEETEEK. The segment covering 118–129 has biased composition (basic and acidic residues); it reads SEEKTEKKKKES.

This is an uncharacterized protein from Acidianus hospitalis (AFV-1).